The sequence spans 1061 residues: Ribonuclease 3 (1061 aa).

2 disordered regions span residues 1–20 (MDFT…QIHQ) and 149–244 (PLHS…SYNE). Residues 156 to 173 (KTPERKENEEDSDSEIRS) are compositionally biased toward basic and acidic residues. RNase III domains follow at residues 586–759 (LSVF…LDSG) and 811–935 (FHRL…VDKG). The Mg(2+) site is built by Glu851, Asp921, and Glu924. The DRBM domain maps to 962–1037 (DAKSHLQQWC…AENALAALEK (76 aa)).

The protein belongs to the ribonuclease III family. Requires Mg(2+) as cofactor. Mn(2+) is required as a cofactor.

Its subcellular location is the nucleus. The enzyme catalyses Endonucleolytic cleavage to 5'-phosphomonoester.. In terms of biological role, executes the initial step of microRNA (miRNA) processing in the nucleus, that is the cleavage of pri-miRNA to release pre-miRNA. Involved in pre-rRNA processing. Cleaves double-strand RNA and does not cleave single-strand RNA. Involved in fertility. Required for the function or synthesis of the let-7 miRNA. This chain is Ribonuclease 3, found in Caenorhabditis briggsae.